We begin with the raw amino-acid sequence, 305 residues long: Nitrogen assimilation regulatory protein nac (305 aa).

The HTH lysR-type domain occupies Met1–Thr58. The segment at residues Leu18–Ala37 is a DNA-binding region (H-T-H motif).

This sequence belongs to the LysR transcriptional regulatory family.

In terms of biological role, transcriptional activator for the hut, put and ure operons and repressor for the gdh and gltB operons in response to nitrogen limitation. Negative regulator of its own expression. The chain is Nitrogen assimilation regulatory protein nac (nac) from Escherichia coli (strain K12).